The chain runs to 243 residues: GFSLQDELDFLKKLHDEELADVQAQIQDQQVQVDMDMAKPDLTAALRDVRLQYENLATKNIQESEDWYKSKFADMTEAANKSNEALRLAKQEANEYRRQVQALTCEVDALKGTNESLERQMREIEENFAIESSSSQDNIARLEEDIRNMKDEMAKHLREYQDLLNVKMALDIEIATYRKLLEGEESRITTPLPNLSSFNLRDAILETKPILENTFSKKVLIKTIETRDGEVINESTQNHDDLE.

The segment at 1-22 is coil 1B; it reads GFSLQDELDFLKKLHDEELADV. The region spanning 1 to 188 is the IF rod domain; sequence GFSLQDELDF…KLLEGEESRI (188 aa). Positions 23-45 are linker 12; the sequence is QAQIQDQQVQVDMDMAKPDLTAA. The segment at 46–184 is coil 2; that stretch reads LRDVRLQYEN…ATYRKLLEGE (139 aa). The tract at residues 185–243 is tail; that stretch reads ESRITTPLPNLSSFNLRDAILETKPILENTFSKKVLIKTIETRDGEVINESTQNHDDLE.

Belongs to the intermediate filament family. As to quaternary structure, homomer. Post-translationally, one of the most prominent phosphoproteins in various cells of mesenchymal origin. Phosphorylation is enhanced during cell division, at which time vimentin filaments are significantly reorganized. As to expression, expressed in low amounts in retina, optic nerve, and brain and in higher amounts in spinal cord.

In terms of biological role, vimentins are class-III intermediate filaments found in various non-epithelial cells, especially mesenchymal cells. Vimentin is attached to the nucleus, endoplasmic reticulum, and mitochondria, either laterally or terminally. In Carassius auratus (Goldfish), this protein is Vimentin A2.